Consider the following 246-residue polypeptide: Adenosylcobinamide-GDP ribazoletransferase (246 aa).

The next 6 membrane-spanning stretches (helical) occupy residues 37-57 (FPAVGLVIGAAVAGAAWAGAL), 64-84 (ALAALIVWVGVTGALHLDGLA), 100-122 (LLAVLADPHVGSFGVVAIVLQLL), 139-159 (ALVLVPFAARIGPLVWTWWLM), 185-205 (LAAAAWFTPALLVTPLLVLWW), and 223-243 (AGIELIETGLLLSVAITGLWI).

Belongs to the CobS family. Mg(2+) is required as a cofactor.

The protein resides in the cell inner membrane. The catalysed reaction is alpha-ribazole + adenosylcob(III)inamide-GDP = adenosylcob(III)alamin + GMP + H(+). It catalyses the reaction alpha-ribazole 5'-phosphate + adenosylcob(III)inamide-GDP = adenosylcob(III)alamin 5'-phosphate + GMP + H(+). It participates in cofactor biosynthesis; adenosylcobalamin biosynthesis; adenosylcobalamin from cob(II)yrinate a,c-diamide: step 7/7. In terms of biological role, joins adenosylcobinamide-GDP and alpha-ribazole to generate adenosylcobalamin (Ado-cobalamin). Also synthesizes adenosylcobalamin 5'-phosphate from adenosylcobinamide-GDP and alpha-ribazole 5'-phosphate. The polypeptide is Adenosylcobinamide-GDP ribazoletransferase (Novosphingobium aromaticivorans (strain ATCC 700278 / DSM 12444 / CCUG 56034 / CIP 105152 / NBRC 16084 / F199)).